Consider the following 219-residue polypeptide: Antigen 5 like allergen Cul n 1 (219 aa).

Positions M1 to S19 are cleaved as a signal peptide. 3 cysteine pairs are disulfide-bonded: C23–C45, C28–C124, and C55–C117. Positions L73–W211 constitute an SCP domain.

The protein belongs to the CRISP family. As to expression, expressed in salivary glands.

Its subcellular location is the secreted. The protein is Antigen 5 like allergen Cul n 1 of Culicoides nubeculosus (Biting midge).